A 779-amino-acid polypeptide reads, in one-letter code: Coenzyme PQQ synthesis protein F (779 aa).

Zn(2+) is bound at residue histidine 57. Catalysis depends on glutamate 60, which acts as the Proton acceptor. 2 residues coordinate Zn(2+): histidine 61 and glutamate 138.

The protein belongs to the peptidase M16 family. Zn(2+) is required as a cofactor.

Its pathway is cofactor biosynthesis; pyrroloquinoline quinone biosynthesis. Required for coenzyme pyrroloquinoline quinone (PQQ) biosynthesis. It is thought that this protein is a protease that cleaves peptides bond in a small peptide (gene pqqA), providing the glutamate and tyrosine residues which are necessary for the synthesis of PQQ. In Pseudomonas syringae pv. tomato (strain ATCC BAA-871 / DC3000), this protein is Coenzyme PQQ synthesis protein F (pqqF).